A 1220-amino-acid polypeptide reads, in one-letter code: Protein transport protein Sec31A (1220 aa).

7 WD repeats span residues 4 to 47, 68 to 111, 120 to 160, 166 to 206, 209 to 254, 258 to 298, and 301 to 342; these read KEVD…EIFE, RYHK…AGDK, KHTG…TPMT, QPPE…PIIK, DHSN…SPLR, NHAR…VLYE, and TNTQ…DGLR. The segment at 161 to 471 is interaction with SEC13; that stretch reads PGAKTQPPED…IDASQTEFEK (311 aa). A WD 8; interaction with SEC13 repeat occupies 397–430; it reads SFSFGGKLVTFENVRMPSHQGAEQQQQQHHVFIS. A phosphoserine mark is found at Ser-527 and Ser-532. A Glycyl lysine isopeptide (Lys-Gly) (interchain with G-Cter in ubiquitin) cross-link involves residue Lys-647. Disordered stretches follow at residues 791–908 and 924–1096; these read GEPV…NAYP and QLYA…GNTF. Ser-799 carries the phosphoserine modification. An interaction with PDCD6 region spans residues 800 to 1113; sequence PKIPYEKQQL…TKKITKKPIP (314 aa). An ALG-2-binding site motif-2 (ABS-2) motif is present at residues 842–848; it reads GFIMHGN. Over residues 849–859 the composition is skewed to polar residues; sequence VNPNAAGQLPT. The span at 869-882 shows a compositional bias: pro residues; that stretch reads PPYPQPQPYQPAQP. Low complexity predominate over residues 962–972; sequence PSSSAYALPPG. Composition is skewed to polar residues over residues 984–995 and 1031–1053; these read PASQRTGPQNGW and PQSQ…SSFP. Position 1161 is a phosphothreonine (Thr-1161). Phosphoserine is present on Ser-1163. A Glycyl lysine isopeptide (Lys-Gly) (interchain with G-Cter in ubiquitin) cross-link involves residue Lys-1217.

Belongs to the WD repeat SEC31 family. In terms of assembly, COPII is composed of at least 5 proteins: the SEC23/24 complex, the SEC13/31 complex and SAR1. SEC13 and SEC31 make a 2:2 tetramer that forms the edge element of the COPII outer coat. The tetramer self-assembles in multiple copies to form the complete polyhedral cage. Interacts (via WD 8) with SEC13. Interacts with PDCD6; interaction takes place in response to cytosolic calcium increase and leads to bridge together the BCR(KLHL12) complex and SEC31A, leading to monoubiquitination. Interacts with KLHL12. In terms of processing, monoubiquitinated by the BCR(KLHL12) E3 ubiquitin ligase complex, leading to regulate the size of COPII coats. Abundantly and ubiquitously expressed.

Its subcellular location is the cytoplasm. It localises to the cytoplasmic vesicle. The protein localises to the COPII-coated vesicle membrane. The protein resides in the endoplasmic reticulum membrane. It is found in the cytosol. Component of the coat protein complex II (COPII) which promotes the formation of transport vesicles from the endoplasmic reticulum (ER). The coat has two main functions, the physical deformation of the endoplasmic reticulum membrane into vesicles and the selection of cargo molecules. The protein is Protein transport protein Sec31A (SEC31A) of Homo sapiens (Human).